Here is a 329-residue protein sequence, read N- to C-terminus: Ketol-acid reductoisomerase (NADP(+)) (329 aa).

Positions Ala-2–Thr-182 constitute a KARI N-terminal Rossmann domain. NADP(+) is bound by residues Tyr-25–Gln-28, Ser-51, Ser-53, and Asp-83–Gln-86. Residue His-108 is part of the active site. NADP(+) is bound at residue Gly-134. Positions Thr-183–Leu-328 constitute a KARI C-terminal knotted domain. Mg(2+) is bound by residues Asp-191, Glu-195, Glu-227, and Glu-231. Residue Ser-252 participates in substrate binding.

Belongs to the ketol-acid reductoisomerase family. Requires Mg(2+) as cofactor.

It catalyses the reaction (2R)-2,3-dihydroxy-3-methylbutanoate + NADP(+) = (2S)-2-acetolactate + NADPH + H(+). The catalysed reaction is (2R,3R)-2,3-dihydroxy-3-methylpentanoate + NADP(+) = (S)-2-ethyl-2-hydroxy-3-oxobutanoate + NADPH + H(+). Its pathway is amino-acid biosynthesis; L-isoleucine biosynthesis; L-isoleucine from 2-oxobutanoate: step 2/4. The protein operates within amino-acid biosynthesis; L-valine biosynthesis; L-valine from pyruvate: step 2/4. Involved in the biosynthesis of branched-chain amino acids (BCAA). Catalyzes an alkyl-migration followed by a ketol-acid reduction of (S)-2-acetolactate (S2AL) to yield (R)-2,3-dihydroxy-isovalerate. In the isomerase reaction, S2AL is rearranged via a Mg-dependent methyl migration to produce 3-hydroxy-3-methyl-2-ketobutyrate (HMKB). In the reductase reaction, this 2-ketoacid undergoes a metal-dependent reduction by NADPH to yield (R)-2,3-dihydroxy-isovalerate. The polypeptide is Ketol-acid reductoisomerase (NADP(+)) (Clostridioides difficile (strain 630) (Peptoclostridium difficile)).